The following is a 171-amino-acid chain: Secreted LysM effector Blys4 (171 aa).

Positions Lys125–Leu169 constitute a LysM domain.

This sequence belongs to the secreted LysM effector family.

Functionally, might have a role in sequestration of chitin oligosaccharides (breakdown products of fungal cell walls that are released during invasion and act as triggers of host immunity) to dampen host defense. The chain is Secreted LysM effector Blys4 from Beauveria bassiana (strain ARSEF 2860) (White muscardine disease fungus).